A 479-amino-acid chain; its full sequence is Bifunctional aspartate aminotransferase and glutamate/aspartate-prephenate aminotransferase (479 aa).

The N-terminal 79 residues, 1 to 79 (MAATTTTSSS…VEVDISLSPR (79 aa)), are a transit peptide targeting the chloroplast. Gly-111 contacts L-aspartate. A pyridoxal 5'-phosphate-binding site is contributed by 172-173 (AK). Residues Trp-197 and Asn-247 each contribute to the L-aspartate site. Pyridoxal 5'-phosphate contacts are provided by residues Asn-247, Tyr-279, and 307–309 (GFS). Lys-310 is modified (N6-(pyridoxal phosphate)lysine). Arg-318 provides a ligand contact to pyridoxal 5'-phosphate. Position 449 (Arg-449) interacts with L-aspartate.

This sequence belongs to the class-I pyridoxal-phosphate-dependent aminotransferase family. Homodimer. It depends on pyridoxal 5'-phosphate as a cofactor. As to expression, expressed in flowers, pistils, stamens, ovaries and at lower levels in leaves and sepals.

It localises to the plastid. The protein localises to the chloroplast. It catalyses the reaction L-aspartate + 2-oxoglutarate = oxaloacetate + L-glutamate. The catalysed reaction is L-arogenate + oxaloacetate = prephenate + L-aspartate. The enzyme catalyses L-arogenate + 2-oxoglutarate = prephenate + L-glutamate. The protein operates within amino-acid biosynthesis; L-phenylalanine biosynthesis; L-arogenate from prephenate (L-Asp route): step 1/1. It participates in amino-acid biosynthesis; L-phenylalanine biosynthesis; L-arogenate from prephenate (L-Glu route): step 1/1. Functionally, prokaryotic-type aspartate aminotransferase. Also has a prenate transaminase activity. Involved in the aromatic amino acids biosynthesis pathway via the arogenate route. Required for the transamination of prephenate into arogenate. Can use 2-oxoglutarate, oxaloacetate and prephenate as substrates, but not phenylpyruvate or 4-hydroxyphenylpyruvate. The polypeptide is Bifunctional aspartate aminotransferase and glutamate/aspartate-prephenate aminotransferase (Petunia hybrida (Petunia)).